Here is a 99-residue protein sequence, read N- to C-terminus: DNA-directed RNA polymerase subunit omega (99 aa).

It belongs to the RNA polymerase subunit omega family. In terms of assembly, the RNAP catalytic core consists of 2 alpha, 1 beta, 1 beta' and 1 omega subunit. When a sigma factor is associated with the core the holoenzyme is formed, which can initiate transcription.

It carries out the reaction RNA(n) + a ribonucleoside 5'-triphosphate = RNA(n+1) + diphosphate. In terms of biological role, promotes RNA polymerase assembly. Latches the N- and C-terminal regions of the beta' subunit thereby facilitating its interaction with the beta and alpha subunits. The polypeptide is DNA-directed RNA polymerase subunit omega (Xylella fastidiosa (strain Temecula1 / ATCC 700964)).